The following is a 577-amino-acid chain: Aspartate--tRNA(Asp/Asn) ligase (577 aa).

Glutamate 171 contacts L-aspartate. Positions 195–198 are aspartate; the sequence is QLFK. Position 217 (arginine 217) interacts with L-aspartate. ATP-binding positions include 217–219 and glutamine 226; that span reads RDE. Histidine 444 serves as a coordination point for L-aspartate. Glutamate 474 provides a ligand contact to ATP. Arginine 481 contributes to the L-aspartate binding site. 526 to 529 lines the ATP pocket; it reads GFDR.

It belongs to the class-II aminoacyl-tRNA synthetase family. Type 1 subfamily. As to quaternary structure, homodimer.

It localises to the cytoplasm. It catalyses the reaction tRNA(Asx) + L-aspartate + ATP = L-aspartyl-tRNA(Asx) + AMP + diphosphate. Functionally, aspartyl-tRNA synthetase with relaxed tRNA specificity since it is able to aspartylate not only its cognate tRNA(Asp) but also tRNA(Asn). Reaction proceeds in two steps: L-aspartate is first activated by ATP to form Asp-AMP and then transferred to the acceptor end of tRNA(Asp/Asn). The sequence is that of Aspartate--tRNA(Asp/Asn) ligase from Helicobacter pylori (strain HPAG1).